Here is a 493-residue protein sequence, read N- to C-terminus: Solute carrier family 2, facilitated glucose transporter member 3 (493 aa).

The Cytoplasmic segment spans residues 1 to 10 (MGTTKVTPSL). A helical membrane pass occupies residues 11 to 32 (VFAVTVATIGSFQFGYNTGVIN). At 33-64 (APETILKDFLNYTLEERLEDLPSEGLLTALWS) the chain is on the extracellular side. N-linked (GlcNAc...) asparagine glycosylation occurs at Asn-43. Residues 65 to 85 (LCVAIFSVGGMIGSFSVGLFV) traverse the membrane as a helical segment. The Cytoplasmic portion of the chain corresponds to 86-90 (NRFGR). A helical transmembrane segment spans residues 91–111 (RNSMLLVNLLAIIAGCLMGFA). At 112-118 (KIAESVE) the chain is on the extracellular side. A helical membrane pass occupies residues 119 to 142 (MLILGRLLIGIFCGLCTGFVPMYI). Residues 143–153 (GEVSPTALRGA) are Cytoplasmic-facing. A helical membrane pass occupies residues 154–174 (FGTLNQLGIVVGILVAQIFGL). Gln-159 serves as a coordination point for D-glucose. Residues 175-183 (DFILGSEEL) lie on the Extracellular side of the membrane. A helical membrane pass occupies residues 184-204 (WPGLLGLTIIPAILQSAALPF). Topologically, residues 205–269 (CPESPRFLLI…LFRSPNYVQP (65 aa)) are cytoplasmic. The residue at position 232 (Thr-232) is a Phosphothreonine. Residues 270–290 (LLISIVLQLSQQLSGINAVFY) traverse the membrane as a helical segment. The important for selectivity against fructose stretch occupies residues 277 to 279 (QLS). D-glucose-binding positions include 280–281 (QQ) and Asn-286. Topologically, residues 291–304 (YSTGIFKDAGVQEP) are extracellular. Residues 305-325 (IYATIGAGVVNTIFTVVSLFL) form a helical membrane-spanning segment. Asn-315 contributes to the D-glucose binding site. Over 326–331 (VERAGR) the chain is Cytoplasmic. A helical membrane pass occupies residues 332 to 352 (RTLHMIGLGGMAVCSVFMTIS). The Extracellular portion of the chain corresponds to 353-363 (LLLKDDYEAMS). The helical transmembrane segment at 364 to 389 (FVCIVAILIYVAFFEIGPGPIPWFIV) threads the bilayer. Residues Glu-378 and Trp-386 each contribute to the D-glucose site. Topologically, residues 390–399 (AELFSQGPRP) are cytoplasmic. A helical transmembrane segment spans residues 400–420 (AAIAVAGCCNWTSNFLVGMLF). The Extracellular segment spans residues 421-429 (PSAAAYLGA). The chain crosses the membrane as a helical span at residues 430–450 (YVFIIFAAFLIFFLIFTFFKV). Residues 451–493 (PETKGRTFEDIARAFEGQAHSGKGPAGVELNSMQPVKETPGNA) are Cytoplasmic-facing. Residues 469-493 (AHSGKGPAGVELNSMQPVKETPGNA) are disordered. Phosphoserine is present on residues Ser-471 and Ser-482. Thr-489 is modified (phosphothreonine).

It belongs to the major facilitator superfamily. Sugar transporter (TC 2.A.1.1) family. Glucose transporter subfamily. In terms of assembly, interacts with SMIM43; the interaction may promote SLC2A3-mediated glucose transport to meet the energy needs of mesendoderm differentiation. In terms of tissue distribution, expressed in spermatozoa (at protein level). Detected in brain (at protein level). Abundantly expressed in the hippocampus, cerebellum and cerebral cortex with lower expression in the dentate gyrus and piriform cortex.

Its subcellular location is the cell membrane. The protein localises to the perikaryon. It localises to the cell projection. The enzyme catalyses D-glucose(out) = D-glucose(in). It carries out the reaction D-galactose(in) = D-galactose(out). Deoxyglucose transport is inhibited by D-glucose, D-galactose and maltose. Galactose transport is inhibited by D-glucose and maltose. Facilitative glucose transporter. Can also mediate the uptake of various other monosaccharides across the cell membrane. Mediates the uptake of glucose, 2-deoxyglucose, galactose, mannose, xylose and fucose, and probably also dehydroascorbate. Does not mediate fructose transport. Required for mesendoderm differentiation. This Mus musculus (Mouse) protein is Solute carrier family 2, facilitated glucose transporter member 3.